Consider the following 430-residue polypeptide: MPYIVDVYAREVLDSRGNPTVEVEVYTETGAFGRALVPSGASTGEYEAVELRDGDKDRYLGKGVLTAVNNVNEIIAPELLGFDVTEQNAIDQLLIELDGTENKGKLGANAILGVSMACARAAADFLQIPLYQYLGGFNSKTLPVPMMNIVNGGEHADNNVDIQEFMIMPVGAPNFREALRMGAQIFHSLKSVLSAKGLNTAVGDEGGFAPNLGSNEEALQTIVEAIEKAGFKPGEEVKLAMDAASSEFYNKEDGKYHLSGEGVVKTSAEMVDWYEELVSKYPIISIEDGLDENDWEGHKLLTERLGKKVQLVGDDLFVTNTKKLSEGIKNGVGNSILIKVNQIGTLTETFDAIEMAKRAGYTAVISHRSGETEDSTIADIAVATNAGQIKTGAPSRTDRVAKYNQLLRIEDQLAETAQYHGINSFYNLNK.

The segment at 1-140 (MPYIVDVYAR…YQYLGGFNSK (140 aa)) is sufficient for secretion. At T141 the chain carries Phosphothreonine. Q163 lines the (2R)-2-phosphoglycerate pocket. E205 functions as the Proton donor in the catalytic mechanism. D242 contributes to the Mg(2+) binding site. At S259 the chain carries Phosphoserine. Residue Y281 is modified to Phosphotyrosine. 2 residues coordinate Mg(2+): E287 and D314. At S325 the chain carries Phosphoserine. (2R)-2-phosphoglycerate-binding residues include K339, R368, S369, and K390. The active-site Proton acceptor is the K339.

This sequence belongs to the enolase family. In terms of assembly, homooctamer. Component of the RNA degradosome complex composed of rny, rnjA, rnjB, pnp, pfkA and eno (although rnjA and rnjB's presence is controversial). Mg(2+) is required as a cofactor. In terms of processing, phosphorylated during sporulation.

It is found in the cytoplasm. It localises to the secreted. The protein resides in the cell surface. It carries out the reaction (2R)-2-phosphoglycerate = phosphoenolpyruvate + H2O. It participates in carbohydrate degradation; glycolysis; pyruvate from D-glyceraldehyde 3-phosphate: step 4/5. With respect to regulation, covalent binding to the substrate (probably 2-PG) at Lys-339 of a small fraction of enolase causes inactivation of the enzyme, and possibly serves as a signal for the export of the protein. Citrate acts as a non-competitive inhibitor for both forward and reverse reactions, probably by chelating Mg(2+). Its function is as follows. Catalyzes the reversible conversion of 2-phosphoglycerate (2-PG) into phosphoenolpyruvate (PEP). It is essential for the degradation of carbohydrates via glycolysis. Functionally, a component of the RNA degradosome, a multi-enzyme complex involved in RNA processing and messenger RNA degradation. This chain is Enolase, found in Bacillus subtilis (strain 168).